The following is a 388-amino-acid chain: Mannitol-1-phosphate 5-dehydrogenase (388 aa).

4 to 15 provides a ligand contact to NAD(+); that stretch reads AVHFGAGNIGRG.

This sequence belongs to the mannitol dehydrogenase family.

The catalysed reaction is D-mannitol 1-phosphate + NAD(+) = beta-D-fructose 6-phosphate + NADH + H(+). The protein is Mannitol-1-phosphate 5-dehydrogenase of Thermoanaerobacter pseudethanolicus (strain ATCC 33223 / 39E) (Clostridium thermohydrosulfuricum).